Here is a 93-residue protein sequence, read N- to C-terminus: MTIIASISKIGNIKSSSSSSIGSGRNSAISFGSNKIACGECGGSSNPMGSLIGNVANTGAGKVSHIPVTVMVDASVAMNPSSMLPSGGSCGCN.

The protein belongs to the hssA/B family.

In Dictyostelium discoideum (Social amoeba), this protein is HssA/B-like protein 23 (hssl23).